A 154-amino-acid polypeptide reads, in one-letter code: Ribonuclease 8 (154 aa).

Residues 1-27 (MAPARAGCCPLLLLLLGLWVAEVLVRA) form the signal peptide. The active-site Proton acceptor is histidine 42. Cystine bridges form between cysteine 50–cysteine 93, cysteine 64–cysteine 118, cysteine 82–cysteine 133, and cysteine 89–cysteine 96. Substrate is bound by residues 65–69 (KDLNT) and lysine 90. Histidine 149 acts as the Proton donor in catalysis.

It belongs to the pancreatic ribonuclease family. Expressed prominently in the placenta and is not detected in any other tissues examined.

The protein localises to the secreted. Its function is as follows. Has a low ribonuclease activity. This Homo sapiens (Human) protein is Ribonuclease 8 (RNASE8).